A 127-amino-acid polypeptide reads, in one-letter code: MTPKKGKKRVKKNIAAGIVHIASTFNNTQITITDVTGNVIAWSSAGARGFKGSRKSTPFAAQVAAGDAAAKAMEHGLKTVSVVVKGPGAGRESALRALSAAGLKITLIRDVTPIPHNGCRPPKRRRV.

This sequence belongs to the universal ribosomal protein uS11 family. Part of the 30S ribosomal subunit. Interacts with proteins S7 and S18. Binds to IF-3.

Functionally, located on the platform of the 30S subunit, it bridges several disparate RNA helices of the 16S rRNA. Forms part of the Shine-Dalgarno cleft in the 70S ribosome. This chain is Small ribosomal subunit protein uS11, found in Anaeromyxobacter dehalogenans (strain 2CP-C).